The chain runs to 265 residues: Phosphate import ATP-binding protein PstB 2 (265 aa).

In terms of domain architecture, ABC transporter spans 13-260; the sequence is FRTENLNVYY…PTKQATRDYV (248 aa). 45–52 contacts ATP; it reads GPSGCGKS.

This sequence belongs to the ABC transporter superfamily. Phosphate importer (TC 3.A.1.7) family. The complex is composed of two ATP-binding proteins (PstB), two transmembrane proteins (PstC and PstA) and a solute-binding protein (PstS).

It localises to the cell inner membrane. The catalysed reaction is phosphate(out) + ATP + H2O = ADP + 2 phosphate(in) + H(+). Its function is as follows. Part of the ABC transporter complex PstSACB involved in phosphate import. Responsible for energy coupling to the transport system. This chain is Phosphate import ATP-binding protein PstB 2, found in Synechococcus sp. (strain JA-2-3B'a(2-13)) (Cyanobacteria bacterium Yellowstone B-Prime).